The sequence spans 121 residues: Large ribosomal subunit protein uL18 (121 aa).

Over residues 1-19 (MASKKVQKIRDKRKARVRA) the composition is skewed to basic residues. Residues 1-23 (MASKKVQKIRDKRKARVRAKISG) form a disordered region.

Belongs to the universal ribosomal protein uL18 family. In terms of assembly, part of the 50S ribosomal subunit; part of the 5S rRNA/L5/L18/L25 subcomplex. Contacts the 5S and 23S rRNAs.

Functionally, this is one of the proteins that bind and probably mediate the attachment of the 5S RNA into the large ribosomal subunit, where it forms part of the central protuberance. The protein is Large ribosomal subunit protein uL18 of Syntrophus aciditrophicus (strain SB).